Consider the following 474-residue polypeptide: UDP-N-acetylmuramate--L-alanine ligase (474 aa).

Residue 116–122 (GTHGKTT) coordinates ATP.

The protein belongs to the MurCDEF family.

Its subcellular location is the cytoplasm. It catalyses the reaction UDP-N-acetyl-alpha-D-muramate + L-alanine + ATP = UDP-N-acetyl-alpha-D-muramoyl-L-alanine + ADP + phosphate + H(+). It functions in the pathway cell wall biogenesis; peptidoglycan biosynthesis. Its function is as follows. Cell wall formation. The polypeptide is UDP-N-acetylmuramate--L-alanine ligase (Hyphomonas neptunium (strain ATCC 15444)).